A 197-amino-acid chain; its full sequence is dTTP/UTP pyrophosphatase (197 aa).

The active-site Proton acceptor is the aspartate 70.

This sequence belongs to the Maf family. YhdE subfamily. Requires a divalent metal cation as cofactor.

It is found in the cytoplasm. It carries out the reaction dTTP + H2O = dTMP + diphosphate + H(+). The catalysed reaction is UTP + H2O = UMP + diphosphate + H(+). Nucleoside triphosphate pyrophosphatase that hydrolyzes dTTP and UTP. May have a dual role in cell division arrest and in preventing the incorporation of modified nucleotides into cellular nucleic acids. The chain is dTTP/UTP pyrophosphatase (yceF2) from Shigella sonnei (strain Ss046).